Consider the following 306-residue polypeptide: HORMA domain-containing protein 2 (306 aa).

The HORMA domain occupies His29–Val232. At Ser271 the chain carries Phosphoserine.

In terms of assembly, interacts with HORMAD1. In terms of processing, phosphorylated in a SPO11-dependent manner. As to expression, specifically expressed in meiotic germ cells.

The protein localises to the nucleus. The protein resides in the chromosome. Functionally, essential for synapsis surveillance during meiotic prophase via the recruitment of ATR activity. Plays a key role in the male mid-pachytene checkpoint and the female meiotic prophase checkpoint: required for efficient build-up of ATR activity on unsynapsed chromosome regions, a process believed to form the basis of meiotic silencing of unsynapsed chromatin (MSUC) and meiotic prophase quality control in both sexes. Required for the DNA double-strand break-independent, BRCA1-dependent activation of ATR on the sex chromosomes that is essential for normal sex body formation. The chain is HORMA domain-containing protein 2 (Hormad2) from Mus musculus (Mouse).